Consider the following 347-residue polypeptide: Globoside alpha-1,3-N-acetylgalactosaminyltransferase 1 (347 aa).

At 1-5 (MHRRR) the chain is on the cytoplasmic side. Residues 6-26 (LALGLGFCLLAGTSLSVLWVY) form a helical; Signal-anchor for type II membrane protein membrane-spanning segment. The Lumenal portion of the chain corresponds to 27 to 347 (LENWLPVSYV…LDKDISCLRS (321 aa)). N-linked (GlcNAc...) asparagine glycosylation is present at N108. Substrate-binding positions include 116 to 121 (FAVGKY), 206 to 208 (DVD), and 228 to 231 (HPSY). Residues D206 and D208 each coordinate Mn(2+). E298 functions as the Nucleophile in the catalytic mechanism.

The protein belongs to the glycosyltransferase 6 family. The cofactor is Mn(2+). In terms of tissue distribution, widely expressed. Expressed at higher level in placenta, ovary and peripheral blood leukocyte, whereas it is weakly expressed in liver, thymus, and testis. Expressed in bone marrow erythroid cells.

Its subcellular location is the golgi apparatus membrane. The protein operates within protein modification; protein glycosylation. Has lost the ability to synthesize Forssman glycolipid antigen (FORS1/FG). Might have acquired an alternative function in glycosphingolipid metabolism, but it remains to be established. It appears to have drifted more slowly than confirmed pseudogenes in the glycosyltransferase 6 family, suggesting that it has remained under evolutionary pressure. This chain is Globoside alpha-1,3-N-acetylgalactosaminyltransferase 1, found in Homo sapiens (Human).